The following is a 37-amino-acid chain: Cytochrome b6-f complex subunit 7 (37 aa).

Residues Ala11–Leu29 form a helical membrane-spanning segment.

The protein belongs to the PetM family. The 4 large subunits of the cytochrome b6-f complex are cytochrome b6, subunit IV (17 kDa polypeptide, PetD), cytochrome f and the Rieske protein, while the 4 small subunits are PetG, PetL, PetM and PetN. The complex functions as a dimer.

The protein localises to the cellular thylakoid membrane. Component of the cytochrome b6-f complex, which mediates electron transfer between photosystem II (PSII) and photosystem I (PSI), cyclic electron flow around PSI, and state transitions. The polypeptide is Cytochrome b6-f complex subunit 7 (Crocosphaera subtropica (strain ATCC 51142 / BH68) (Cyanothece sp. (strain ATCC 51142))).